Consider the following 1693-residue polypeptide: Latrophilin Cirl (1693 aa).

Topologically, residues methionine 1–arginine 753 are extracellular. The SUEL-type lectin domain maps to alanine 25–isoleucine 114. The N-linked (GlcNAc...) asparagine glycan is linked to asparagine 142. Composition is skewed to polar residues over residues threonine 185–alanine 198 and asparagine 256–isoleucine 265. The disordered stretch occupies residues threonine 185–alanine 299. Residue asparagine 256 is glycosylated (N-linked (GlcNAc...) asparagine). The span at aspartate 275–alanine 299 shows a compositional bias: low complexity. N-linked (GlcNAc...) asparagine glycosylation is found at asparagine 301, asparagine 340, asparagine 397, asparagine 641, asparagine 689, and asparagine 716. The disordered stretch occupies residues tyrosine 375–serine 399. The GAIN-B domain occupies lysine 564 to histidine 740. Cystine bridges form between cysteine 695–cysteine 722 and cysteine 710–cysteine 724. The tract at residues cysteine 695 to histidine 740 is GPS. A helical membrane pass occupies residues isoleucine 754–leucine 774. Residues lysine 775–threonine 787 are Cytoplasmic-facing. Residues serine 788 to isoleucine 808 traverse the membrane as a helical segment. Residues glutamate 809–serine 814 lie on the Extracellular side of the membrane. The chain crosses the membrane as a helical span at residues isoleucine 815 to phenylalanine 835. Over cysteine 836–valine 861 the chain is Cytoplasmic. The chain crosses the membrane as a helical span at residues asparagine 862–isoleucine 882. Topologically, residues aspartate 883–phenylalanine 906 are extracellular. Residues valine 907–isoleucine 927 traverse the membrane as a helical segment. Topologically, residues methionine 928–serine 954 are cytoplasmic. Residues phenylalanine 955–alanine 975 form a helical membrane-spanning segment. At lysine 976–tyrosine 985 the chain is on the extracellular side. Residues glycine 986–isoleucine 1006 form a helical membrane-spanning segment. The Cytoplasmic segment spans residues glutamine 1007–lysine 1693. The residue at position 1142 (serine 1142) is a Phosphoserine. Disordered regions lie at residues histidine 1156–proline 1194, lysine 1220–arginine 1247, glutamine 1294–histidine 1319, glycine 1433–arginine 1521, and leucine 1601–histidine 1673. Phosphoserine occurs at positions 1239 and 1246. The span at glutamine 1294–leucine 1309 shows a compositional bias: low complexity. 2 positions are modified to phosphoserine: serine 1310 and serine 1311. Residues glycine 1439 to arginine 1464 are compositionally biased toward low complexity. Acidic residues-rich tracts occupy residues aspartate 1472–threonine 1486 and cysteine 1496–leucine 1507. Over residues glutamate 1508–arginine 1521 the composition is skewed to basic and acidic residues. Positions leucine 1630–histidine 1655 are enriched in low complexity. Residues glutamine 1656 to arginine 1672 are compositionally biased toward basic residues.

This sequence belongs to the G-protein coupled receptor 2 family. LN-TM7 subfamily. Forms a heterodimer, consisting of a large extracellular region non-covalently linked to a seven-transmembrane moiety. Proteolytically cleaved into 2 subunits, an extracellular subunit and a seven-transmembrane subunit.

It localises to the cell membrane. The sequence is that of Latrophilin Cirl from Drosophila sechellia (Fruit fly).